The following is a 125-amino-acid chain: Large ribosomal subunit protein bL19 (125 aa).

This sequence belongs to the bacterial ribosomal protein bL19 family.

This protein is located at the 30S-50S ribosomal subunit interface and may play a role in the structure and function of the aminoacyl-tRNA binding site. In Ehrlichia ruminantium (strain Gardel), this protein is Large ribosomal subunit protein bL19.